A 460-amino-acid polypeptide reads, in one-letter code: Exodeoxyribonuclease 7 large subunit (460 aa).

The tract at residues 438-460 (ARVEKVNREEEKQSGSQKNGTRD) is disordered. Residues 439–450 (RVEKVNREEEKQ) are compositionally biased toward basic and acidic residues. Residues 451-460 (SGSQKNGTRD) show a composition bias toward polar residues.

The protein belongs to the XseA family. Heterooligomer composed of large and small subunits.

The protein resides in the cytoplasm. The catalysed reaction is Exonucleolytic cleavage in either 5'- to 3'- or 3'- to 5'-direction to yield nucleoside 5'-phosphates.. Functionally, bidirectionally degrades single-stranded DNA into large acid-insoluble oligonucleotides, which are then degraded further into small acid-soluble oligonucleotides. This Brevibacillus brevis (strain 47 / JCM 6285 / NBRC 100599) protein is Exodeoxyribonuclease 7 large subunit.